The chain runs to 473 residues: Aspartyl/glutamyl-tRNA(Asn/Gln) amidotransferase subunit B (473 aa).

It belongs to the GatB/GatE family. GatB subfamily. Heterotrimer of A, B and C subunits.

It carries out the reaction L-glutamyl-tRNA(Gln) + L-glutamine + ATP + H2O = L-glutaminyl-tRNA(Gln) + L-glutamate + ADP + phosphate + H(+). The catalysed reaction is L-aspartyl-tRNA(Asn) + L-glutamine + ATP + H2O = L-asparaginyl-tRNA(Asn) + L-glutamate + ADP + phosphate + 2 H(+). Its function is as follows. Allows the formation of correctly charged Asn-tRNA(Asn) or Gln-tRNA(Gln) through the transamidation of misacylated Asp-tRNA(Asn) or Glu-tRNA(Gln) in organisms which lack either or both of asparaginyl-tRNA or glutaminyl-tRNA synthetases. The reaction takes place in the presence of glutamine and ATP through an activated phospho-Asp-tRNA(Asn) or phospho-Glu-tRNA(Gln). In Levilactobacillus brevis (strain ATCC 367 / BCRC 12310 / CIP 105137 / JCM 1170 / LMG 11437 / NCIMB 947 / NCTC 947) (Lactobacillus brevis), this protein is Aspartyl/glutamyl-tRNA(Asn/Gln) amidotransferase subunit B.